The primary structure comprises 404 residues: Phosphopentomutase (404 aa).

Mn(2+)-binding residues include Asp-10, Asp-303, His-308, Asp-344, His-345, and His-356.

This sequence belongs to the phosphopentomutase family. Requires Mn(2+) as cofactor.

It localises to the cytoplasm. The enzyme catalyses 2-deoxy-alpha-D-ribose 1-phosphate = 2-deoxy-D-ribose 5-phosphate. The catalysed reaction is alpha-D-ribose 1-phosphate = D-ribose 5-phosphate. It functions in the pathway carbohydrate degradation; 2-deoxy-D-ribose 1-phosphate degradation; D-glyceraldehyde 3-phosphate and acetaldehyde from 2-deoxy-alpha-D-ribose 1-phosphate: step 1/2. Isomerase that catalyzes the conversion of deoxy-ribose 1-phosphate (dRib-1-P) and ribose 1-phosphate (Rib-1-P) to deoxy-ribose 5-phosphate (dRib-5-P) and ribose 5-phosphate (Rib-5-P), respectively. This is Phosphopentomutase from Shewanella sp. (strain MR-7).